The sequence spans 520 residues: Keratin, type II cytoskeletal 8 (520 aa).

Low complexity predominate over residues 1–19; it reads MSTYSKKTSYTVKSSSSGS. A disordered region spans residues 1 to 20; the sequence is MSTYSKKTSYTVKSSSSGSI. Residues 2–114 are head; sequence STYSKKTSYT…DPNIQIVRTQ (113 aa). Ser-28 is subject to Phosphoserine. The segment at 115–150 is coil 1A; the sequence is EKEQIKTLNNRFASFIDKVRFLEQQNKMLETKWSLL. The region spanning 115–426 is the IF rod domain; that stretch reads EKEQIKTLNN…KLLEGEEDRL (312 aa). Residues 151–166 form a linker 1 region; the sequence is QNQTATRSNIDAMFEA. A coil 1B region spans residues 168–259; sequence IANLRRQLDS…QIFEEEIREL (92 aa). The segment at 260 to 283 is linker 12; it reads QSQIKDTSVVVEMDNSRNLDMDAI. The tract at residues 284–422 is coil 2; the sequence is VAEVRAQYED…ATYRKLLEGE (139 aa). Residues 423 to 520 form a tail region; that stretch reads EDRLATGIKA…VSESSEVVQD (98 aa).

This sequence belongs to the intermediate filament family. Heterotetramer of two type I and two type II keratins. Keratin-8 associates with keratin-18. Expressed in simple epithelia.

The protein resides in the cytoplasm. It localises to the nucleus. The protein localises to the nucleoplasm. Its subcellular location is the nucleus matrix. Together with KRT19, helps to link the contractile apparatus to dystrophin at the costameres of striated muscle. The protein is Keratin, type II cytoskeletal 8 of Danio rerio (Zebrafish).